A 697-amino-acid polypeptide reads, in one-letter code: Phosphatase and actin regulator 4-B (697 aa).

Residues 42 to 67 form an RPEL 1 repeat; that stretch reads EVLERKISMRKPREELVKRGLIVDVP. Disordered regions lie at residues 63-381 and 450-569; these read IVDV…LTLA and LKVP…SKDE. Residues 189–202 show a composition bias toward basic and acidic residues; sequence HVPEKTSEKYRPKS. Composition is skewed to pro residues over residues 317 to 326 and 370 to 380; these read PSPPLPPKRA and APNPPVPPLTL. 3 stretches are compositionally biased toward acidic residues: residues 454 to 469, 501 to 514, and 522 to 532; these read DDDDDEDELSLEDESL, QEEDEEEGVSDTDS, and EEDEDEEEEET. RPEL repeat units lie at residues 579 to 604 and 616 to 641; these read TQLNRRLSQRPTAEELEQRNILQKNE and RRLTRKLSQRPTVAELLERKILRFNE.

Belongs to the phosphatase and actin regulator family. Binds ppp1ca and actin.

The protein localises to the cytoplasm. It localises to the cell projection. Its subcellular location is the lamellipodium. Functionally, regulator of protein phosphatase 1 (PP1) required for neural tube and optic fissure closure, and enteric neural crest cell (ENCCs) migration during development. Acts as an activator of PP1. During neural tube closure, localizes to the ventral neural tube and activates PP1, leading to down-regulate cell proliferation within cranial neural tissue and the neural retina. Also acts as a regulator of migration of enteric neural crest cells (ENCCs) by activating PP1, leading to repression of the integrin signaling through the rho/rock pathway. This Xenopus laevis (African clawed frog) protein is Phosphatase and actin regulator 4-B (phactr4-b).